A 116-amino-acid chain; its full sequence is Putative superoxide reductase (116 aa).

5 residues coordinate Fe cation: histidine 20, histidine 46, histidine 52, cysteine 101, and histidine 104.

It belongs to the desulfoferrodoxin family. The cofactor is Fe cation.

It carries out the reaction reduced [rubredoxin] + superoxide + 2 H(+) = oxidized [rubredoxin] + H2O2. In terms of biological role, uses electrons from reduced NADP, by way of rubredoxin and an oxidoreductase, to catalyze the reduction of superoxide to hydrogen peroxide. This chain is Putative superoxide reductase, found in Methanocaldococcus jannaschii (strain ATCC 43067 / DSM 2661 / JAL-1 / JCM 10045 / NBRC 100440) (Methanococcus jannaschii).